A 371-amino-acid chain; its full sequence is Peptide chain release factor 2 (371 aa).

Gln252 bears the N5-methylglutamine mark.

This sequence belongs to the prokaryotic/mitochondrial release factor family. Post-translationally, methylated by PrmC. Methylation increases the termination efficiency of RF2.

It localises to the cytoplasm. Functionally, peptide chain release factor 2 directs the termination of translation in response to the peptide chain termination codons UGA and UAA. This Staphylococcus haemolyticus (strain JCSC1435) protein is Peptide chain release factor 2.